The sequence spans 103 residues: Large ribosomal subunit protein bL21 (103 aa).

The protein belongs to the bacterial ribosomal protein bL21 family. Part of the 50S ribosomal subunit. Contacts protein L20.

Its function is as follows. This protein binds to 23S rRNA in the presence of protein L20. This Pectobacterium atrosepticum (strain SCRI 1043 / ATCC BAA-672) (Erwinia carotovora subsp. atroseptica) protein is Large ribosomal subunit protein bL21.